Consider the following 612-residue polypeptide: Beta-mannosyltransferase 5 (612 aa).

Topologically, residues 1–12 (MVQKQYRFAPKS) are cytoplasmic. Residues 13–33 (IFTFVFLCFVAIVVIISTSSL) form a helical membrane-spanning segment. The Extracellular portion of the chain corresponds to 34 to 612 (VQVEESLDPI…YRAHLKRWQN (579 aa)). Residues Asn-224, Asn-230, and Asn-480 are each glycosylated (N-linked (GlcNAc...) asparagine).

Belongs to the BMT family.

It localises to the membrane. Beta-mannosyltransferase involved in cell wall biosynthesis. Required for beta-1,2-mannose transfer on phospholipomannan. The chain is Beta-mannosyltransferase 5 (BMT5) from Candida albicans (strain SC5314 / ATCC MYA-2876) (Yeast).